Consider the following 208-residue polypeptide: V-type ATP synthase subunit D (208 aa).

The protein belongs to the V-ATPase D subunit family.

Produces ATP from ADP in the presence of a proton gradient across the membrane. The protein is V-type ATP synthase subunit D of Streptococcus pyogenes serotype M49 (strain NZ131).